The chain runs to 107 residues: Putative double-stranded DNA mimic protein Asuc_1259 (107 aa).

The protein belongs to the putative dsDNA mimic protein family.

Functionally, may act as a double-stranded DNA (dsDNA) mimic. Probably regulates the activity of a dsDNA-binding protein. This is Putative double-stranded DNA mimic protein Asuc_1259 from Actinobacillus succinogenes (strain ATCC 55618 / DSM 22257 / CCUG 43843 / 130Z).